The following is a 380-amino-acid chain: Glycine betaine/carnitine/choline transport ATP-binding protein OpuCA (380 aa).

One can recognise an ABC transporter domain in the interval 2-236; that stretch reads LKLEQVSKVY…PANEFVEEFI (235 aa). Residue 35 to 42 coordinates ATP; that stretch reads GPSGCGKT. 2 CBS domains span residues 255–314 and 315–373; these read MNRT…VGDV and YRSD…WGDE.

This sequence belongs to the ABC transporter superfamily. As to quaternary structure, the complex is composed of two ATP-binding proteins (OpuCA), two transmembrane proteins (OpuCB and OpuCD) and a solute-binding protein (OpuCC).

With respect to regulation, binds cyclic di-AMP (c-di-AMP), which may regulate the transporter activity. Its function is as follows. Involved in a high affinity multicomponent binding-protein-dependent transport system for glycine betaine, carnitine and choline; probably responsible for energy coupling to the transport system. This is Glycine betaine/carnitine/choline transport ATP-binding protein OpuCA (opuCA) from Bacillus subtilis (strain 168).